The primary structure comprises 524 residues: Translation initiation factor eIF2B subunit delta (524 aa).

Positions M1 to D173 are disordered. A2 carries the N-acetylalanine modification. The residue at position 12 (S12) is a Phosphoserine. A compositionally biased stretch (basic and acidic residues) spans A26 to R40. The segment covering K41–K51 has biased composition (basic residues). Residue T86 is modified to Phosphothreonine. Composition is skewed to basic and acidic residues over residues A87 to D121 and K161 to D173. The segment at R171–L180 is may bind the chemical integrated stress response (ISR) inhibitor ISRIB.

It belongs to the eIF-2B alpha/beta/delta subunits family. As to quaternary structure, component of the translation initiation factor 2B (eIF2B) complex which is a heterodecamer of two sets of five different subunits: alpha, beta, gamma, delta and epsilon. Subunits alpha, beta and delta comprise a regulatory subcomplex and subunits epsilon and gamma comprise a catalytic subcomplex. Within the complex, the hexameric regulatory complex resides at the center, with the two heterodimeric catalytic subcomplexes bound on opposite sides.

It localises to the cytoplasm. The protein resides in the cytosol. Its activity is regulated as follows. Activated by the chemical integrated stress response (ISR) inhibitor ISRIB which stimulates guanine nucleotide exchange factor activity for both phosphorylated and unphosphorylated eIF2. Acts as a component of the translation initiation factor 2B (eIF2B) complex, which catalyzes the exchange of GDP for GTP on eukaryotic initiation factor 2 (eIF2) gamma subunit. Its guanine nucleotide exchange factor activity is repressed when bound to eIF2 complex phosphorylated on the alpha subunit, thereby limiting the amount of methionyl-initiator methionine tRNA available to the ribosome and consequently global translation is repressed. This is Translation initiation factor eIF2B subunit delta (EIF2B4) from Bos taurus (Bovine).